Consider the following 98-residue polypeptide: Acylphosphatase-1 (98 aa).

An Acylphosphatase-like domain is found at 8-98 (SVDYEVFGKV…LEHSTFSICK (91 aa)). Residues R23 and N41 contribute to the active site.

Belongs to the acylphosphatase family.

The enzyme catalyses an acyl phosphate + H2O = a carboxylate + phosphate + H(+). This chain is Acylphosphatase-1 (acyp1), found in Xenopus tropicalis (Western clawed frog).